A 424-amino-acid polypeptide reads, in one-letter code: GTPase Obg (424 aa).

The Obg domain occupies 1–158 (MFYDQAKIYV…RNLLLELKLL (158 aa)). In terms of domain architecture, OBG-type G spans 159-329 (ADVGLVGFPN…LVYAAAKALP (171 aa)). Residues 165 to 172 (GFPNVGKS), 190 to 194 (FTTLV), 212 to 215 (DIPG), 282 to 285 (NKMD), and 310 to 312 (SAA) each bind GTP. Positions 172 and 192 each coordinate Mg(2+). The 78-residue stretch at 347-424 (TQASAPHRFE…IAGIEFEWEE (78 aa)) folds into the OCT domain.

Belongs to the TRAFAC class OBG-HflX-like GTPase superfamily. OBG GTPase family. As to quaternary structure, monomer. It depends on Mg(2+) as a cofactor.

It localises to the cytoplasm. In terms of biological role, an essential GTPase which binds GTP, GDP and possibly (p)ppGpp with moderate affinity, with high nucleotide exchange rates and a fairly low GTP hydrolysis rate. Plays a role in control of the cell cycle, stress response, ribosome biogenesis and in those bacteria that undergo differentiation, in morphogenesis control. In Desulfitobacterium hafniense (strain DSM 10664 / DCB-2), this protein is GTPase Obg.